The chain runs to 442 residues: Exodeoxyribonuclease 7 large subunit (442 aa).

Belongs to the XseA family. In terms of assembly, heterooligomer composed of large and small subunits.

It is found in the cytoplasm. The enzyme catalyses Exonucleolytic cleavage in either 5'- to 3'- or 3'- to 5'-direction to yield nucleoside 5'-phosphates.. Bidirectionally degrades single-stranded DNA into large acid-insoluble oligonucleotides, which are then degraded further into small acid-soluble oligonucleotides. In Shewanella loihica (strain ATCC BAA-1088 / PV-4), this protein is Exodeoxyribonuclease 7 large subunit.